Reading from the N-terminus, the 86-residue chain is Thioredoxin (86 aa).

Residues Cys-15 and Cys-18 each act as nucleophile in the active site. The cysteines at positions 15 and 18 are disulfide-linked.

This sequence belongs to the glutaredoxin family.

Its function is as follows. Does not function as a glutathione-disulfide oxidoreductase in the presence of glutathione and glutathione reductase. Has low thioredoxin activity in vitro. The sequence is that of Thioredoxin from Methanocaldococcus jannaschii (strain ATCC 43067 / DSM 2661 / JAL-1 / JCM 10045 / NBRC 100440) (Methanococcus jannaschii).